Here is a 161-residue protein sequence, read N- to C-terminus: MKLAQFRILLLIATLVVAVDQLTKGLIVRCLKLHEALPVVPNFFDLVYVRNKGAAFGILANTEYRVPFFIITTSVAVVFLAWFYRQYRPDQVLGRCAVSLVLGGAIGNLIDRVRFGEVVDFLDVHWYQYHWPAFNVADSAICVGVGMLLLAQWRDGIRHQA.

The next 2 helical transmembrane spans lie at 64–84 and 92–114; these read YRVP…AWFY and VLGR…DRVR. Residues D120 and D138 contribute to the active site. The helical transmembrane segment at 131–151 threads the bilayer; that stretch reads WPAFNVADSAICVGVGMLLLA.

The protein belongs to the peptidase A8 family.

The protein resides in the cell inner membrane. It carries out the reaction Release of signal peptides from bacterial membrane prolipoproteins. Hydrolyzes -Xaa-Yaa-Zaa-|-(S,diacylglyceryl)Cys-, in which Xaa is hydrophobic (preferably Leu), and Yaa (Ala or Ser) and Zaa (Gly or Ala) have small, neutral side chains.. It participates in protein modification; lipoprotein biosynthesis (signal peptide cleavage). Functionally, this protein specifically catalyzes the removal of signal peptides from prolipoproteins. This chain is Lipoprotein signal peptidase, found in Syntrophotalea carbinolica (strain DSM 2380 / NBRC 103641 / GraBd1) (Pelobacter carbinolicus).